Consider the following 410-residue polypeptide: WD repeat and FYVE domain-containing protein 1 (410 aa).

WD repeat units follow at residues 22–61, 66–105, 112–150, 153–192, 197–236, and 240–279; these read GHQDAVTAALLIPKEDGVITASEDRTIRVWLKRDSGQYWP, TMASPCSAMAYHHDSRRIFVGQDNGAVMEFHVSEDFNKMN, AHQNRVSAIIFSLATEWVISTGHDKCVSWMCTRSGNMLG, FFTSWASCLQYDFDTQYAFVGDYSGQITLLKLEQNTCSVI, GHEGSVACLWWDPIQRLLFSGASDNSIIMWDIGGRKGRTL, and GHHDKVQSLCYLQLTRQLVSCSSDGGIAVWNMDVSREEAP. An FYVE-type zinc finger spans residues 281 to 352; that stretch reads WLESDSCQKC…VCDSCYDSIK (72 aa). Zn(2+)-binding residues include C287, C290, C314, C317, C322, C325, C344, and C347. One copy of the WD 7 repeat lies at 364–403; that stretch reads EGKHNISHMSMDIARGLMVTCGTDRIVKIWDMTPVVGCSL. At S408 the chain carries Phosphoserine.

As to quaternary structure, binds PtdIns3P in vitro with high specificity over other phosphoinositides. Interacts (via WD repeat 2) with tyrosine-phosphorylated TLR3 (via TIR domain) in response to poly(I:C). Interacts with TICAM1 in response to poly(I:C). Interacts with TLR4 in response to LPS.

It localises to the early endosome. Positively regulates TLR3- and TLR4-mediated signaling pathways by bridging the interaction between TLR3 or TLR4 and TICAM1. Promotes TLR3/4 ligand-induced activation of transcription factors IRF3 and NF-kappa-B, as well as the production of IFN-beta and inflammatory cytokines. The sequence is that of WD repeat and FYVE domain-containing protein 1 (WDFY1) from Homo sapiens (Human).